A 104-amino-acid chain; its full sequence is uncharacterized protein (104 aa).

A helical transmembrane segment spans residues 81-97 (CLLMLPCISVVMSISSV).

Its subcellular location is the cell membrane. This is an uncharacterized protein from Bacillus subtilis (strain 168).